The primary structure comprises 181 residues: MAFDLTDAKSRMQGAQDALQRELTSIRTGRANPHILDRIEVEYYGAMTPLNQVASISVPEARVLLITPFDKTALEEIIRAINMSDLGLNPSSDGNIVRLMIPQMTEEGRKDLAKQVKAEAEKAKVSVRNVRRDAMDSVKKEKEMPEDDVRKAENDIQKLTDNNIKAIDDIASEKEKELLTI.

The tract at residues 131–154 (RRDAMDSVKKEKEMPEDDVRKAEN) is disordered.

It belongs to the RRF family.

It localises to the cytoplasm. Responsible for the release of ribosomes from messenger RNA at the termination of protein biosynthesis. May increase the efficiency of translation by recycling ribosomes from one round of translation to another. In Leuconostoc citreum (strain KM20), this protein is Ribosome-recycling factor.